A 186-amino-acid polypeptide reads, in one-letter code: MGGTFDPIHHGHLVVASEVASRFCLDEVIFVPTGRPPHKKEVSDPWHRYLMAVIATASNQRFSVSKIDIERTGPTFTVDTLRELREQLPSSDLFFITGTDALARIFSWKDADTLWSLAHFVAVSRPGHEVVDIPNDRISFLEVPAMAISSSNCRERVRSGLPIWYLVPEGVVQYIAKHGLYRSLYG.

The protein belongs to the NadD family.

It catalyses the reaction nicotinate beta-D-ribonucleotide + ATP + H(+) = deamido-NAD(+) + diphosphate. It functions in the pathway cofactor biosynthesis; NAD(+) biosynthesis; deamido-NAD(+) from nicotinate D-ribonucleotide: step 1/1. Functionally, catalyzes the reversible adenylation of nicotinate mononucleotide (NaMN) to nicotinic acid adenine dinucleotide (NaAD). This is Probable nicotinate-nucleotide adenylyltransferase from Tropheryma whipplei (strain Twist) (Whipple's bacillus).